Here is a 138-residue protein sequence, read N- to C-terminus: Class I hydrophobin 1 (138 aa).

A signal peptide spans 1–19; sequence MRFSAATVSALAMALTVAA. Intrachain disulfides connect cysteine 45/cysteine 113, cysteine 53/cysteine 107, cysteine 54/cysteine 91, and cysteine 114/cysteine 131.

This sequence belongs to the fungal hydrophobin family. As to quaternary structure, interacts with the lipid droplet coating protein Cap20.

The protein localises to the secreted. Its subcellular location is the lipid droplet. In terms of biological role, aerial growth, conidiation, and dispersal of filamentous fungi in the environment rely upon a capability of their secreting small amphipathic proteins called hydrophobins (HPBs) with low sequence identity. Class I can self-assemble into an outermost layer of rodlet bundles on aerial cell surfaces, conferring cellular hydrophobicity that supports fungal growth, development and dispersal; whereas Class II form highly ordered films at water-air interfaces through intermolecular interactions but contribute nothing to the rodlet structure. Hydr1 is a class I hydrophobin involved in spore germination, appressorium formation, but not in the formation of the rodlet layer of conidia. Responsible for the full virulence on rubber tree leaves. The protein is Class I hydrophobin 1 of Colletotrichum siamense (Anthracnose fungus).